The primary structure comprises 264 residues: Type III pantothenate kinase (264 aa).

Residue 6-13 (DIGNTQTV) participates in ATP binding. Substrate is bound by residues Tyr100 and 107-110 (GADR). The active-site Proton acceptor is the Asp109. Asp129 lines the K(+) pocket. Residue Thr132 coordinates ATP. Position 185 (Thr185) interacts with substrate.

This sequence belongs to the type III pantothenate kinase family. In terms of assembly, homodimer. NH4(+) is required as a cofactor. Requires K(+) as cofactor.

Its subcellular location is the cytoplasm. The enzyme catalyses (R)-pantothenate + ATP = (R)-4'-phosphopantothenate + ADP + H(+). Its pathway is cofactor biosynthesis; coenzyme A biosynthesis; CoA from (R)-pantothenate: step 1/5. In terms of biological role, catalyzes the phosphorylation of pantothenate (Pan), the first step in CoA biosynthesis. In Rubrobacter xylanophilus (strain DSM 9941 / JCM 11954 / NBRC 16129 / PRD-1), this protein is Type III pantothenate kinase.